Here is a 488-residue protein sequence, read N- to C-terminus: uncharacterized protein (488 aa).

It belongs to the protein kinase superfamily. ADCK protein kinase family.

This is an uncharacterized protein from Mycobacterium tuberculosis (strain CDC 1551 / Oshkosh).